A 157-amino-acid chain; its full sequence is Small ribosomal subunit protein uS7 (157 aa).

The protein belongs to the universal ribosomal protein uS7 family. Part of the 30S ribosomal subunit. Contacts proteins S9 and S11.

Its function is as follows. One of the primary rRNA binding proteins, it binds directly to 16S rRNA where it nucleates assembly of the head domain of the 30S subunit. Is located at the subunit interface close to the decoding center, probably blocks exit of the E-site tRNA. This chain is Small ribosomal subunit protein uS7, found in Chloroflexus aurantiacus (strain ATCC 29366 / DSM 635 / J-10-fl).